We begin with the raw amino-acid sequence, 575 residues long: Chaperonin CPN60-1, mitochondrial (575 aa).

A mitochondrion-targeting transit peptide spans 1 to 32 (MHRFATGLASKARLARNGANQIASRSNWRRNY).

It belongs to the chaperonin (HSP60) family.

The protein resides in the mitochondrion. Implicated in mitochondrial protein import and macromolecular assembly. May facilitate the correct folding of imported proteins. May also prevent misfolding and promote the refolding and proper assembly of unfolded polypeptides generated under stress conditions in the mitochondrial matrix. This Cucurbita maxima (Pumpkin) protein is Chaperonin CPN60-1, mitochondrial (CPN60-1).